The following is a 105-amino-acid chain: Pyrimidine/purine nucleoside phosphorylase (105 aa).

It belongs to the nucleoside phosphorylase PpnP family.

It catalyses the reaction a purine D-ribonucleoside + phosphate = a purine nucleobase + alpha-D-ribose 1-phosphate. The catalysed reaction is adenosine + phosphate = alpha-D-ribose 1-phosphate + adenine. The enzyme catalyses cytidine + phosphate = cytosine + alpha-D-ribose 1-phosphate. It carries out the reaction guanosine + phosphate = alpha-D-ribose 1-phosphate + guanine. It catalyses the reaction inosine + phosphate = alpha-D-ribose 1-phosphate + hypoxanthine. The catalysed reaction is thymidine + phosphate = 2-deoxy-alpha-D-ribose 1-phosphate + thymine. The enzyme catalyses uridine + phosphate = alpha-D-ribose 1-phosphate + uracil. It carries out the reaction xanthosine + phosphate = alpha-D-ribose 1-phosphate + xanthine. Its function is as follows. Catalyzes the phosphorolysis of diverse nucleosides, yielding D-ribose 1-phosphate and the respective free bases. Can use uridine, adenosine, guanosine, cytidine, thymidine, inosine and xanthosine as substrates. Also catalyzes the reverse reactions. The sequence is that of Pyrimidine/purine nucleoside phosphorylase from Wolinella succinogenes (strain ATCC 29543 / DSM 1740 / CCUG 13145 / JCM 31913 / LMG 7466 / NCTC 11488 / FDC 602W) (Vibrio succinogenes).